Consider the following 102-residue polypeptide: Simukunin (102 aa).

The first 19 residues, Met1 to Ala19, serve as a signal peptide directing secretion. Positions Cys24–Cys74 constitute a BPTI/Kunitz inhibitor domain. 3 cysteine pairs are disulfide-bonded: Cys24–Cys74, Cys33–Cys57, and Cys49–Cys70. Basic residues predominate over residues Thr83–Thr92. The interval Thr83–Asp102 is disordered.

This sequence belongs to the venom Kunitz-type family. In terms of assembly, interacts with mouse, bovine and human coagulation factor X (F10) (activated). Interacts with host elastase. Salivary gland (at protein level). Not detected in female carcass without head and salivary glands. Not detected in males.

The protein resides in the secreted. In terms of biological role, salivary anticoagulant that inhibits plasma clotting in the host. Strongly inhibits host elastase, coagulation factors Xa (F10) and cathepsin G (CTSG). Inhibits host plasmin (PLG), kallikrein, trypsin, beta-tryptase and coagulation factor XIa (F11). The polypeptide is Simukunin (Simulium vittatum (Striped black fly)).